The primary structure comprises 191 residues: Programmed cell death protein 6 (191 aa).

A2 bears the N-acetylalanine mark. 5 EF-hand domains span residues 23–58 (PDQS…GTWT), 59–89 (PFNP…TGVW), 90–125 (KYIT…FGYR), 126–161 (LSDQ…LQRL), and 162–191 (TDIF…FSIV). Residues D36, D38, S40, V42, and E47 each contribute to the Ca(2+) site. The Ca(2+) site is built by D103, D105, S107, M109, and E114. Mg(2+)-binding residues include D169, D171, D173, and W175.

As to quaternary structure, homodimer and heterodimer; heterodimerizes (via the EF-hand 5) with PEF1. Isoform 1 and isoform 2 self-associate; probably forming homodimers. Interacts with CPNE4 (via VWFA domain). Interacts with PDCD6IP; the interaction is calcium-dependent. Interacts with RBM22. Interacts with PLSCR4. Interacts with ANXA7 and TSG101. Interacts with DAPK1. Interacts with SEC31A; the interaction is calcium-dependent and promotes monoubiquitination of SEC31A. Interacts with ANXA11 (via N-terminus); the interaction is calcium-dependent. Interacts with PLSCR3 (via N-terminus); the interaction is calcium-dependent. Interacts with MCOLN1; the interaction is calcium-dependent. Interacts with KDR; the interaction is calcium-dependent. Interacts with HEBP2; the interaction is calcium-dependent. Interacts with TFG. Isoform 1: Interacts with SHISA5, leading to stabilize it. Isoform 2: Does not interact with SHISA5. Isoform 2: Does not interact with PDCD6IP, TSG101, ANXA7 and ANXA11.

It is found in the endoplasmic reticulum membrane. The protein resides in the cytoplasmic vesicle. Its subcellular location is the COPII-coated vesicle membrane. The protein localises to the cytoplasm. It localises to the nucleus. It is found in the endosome. Functionally, calcium sensor that plays a key role in processes such as endoplasmic reticulum (ER)-Golgi vesicular transport, endosomal biogenesis or membrane repair. Acts as an adapter that bridges unrelated proteins or stabilizes weak protein-protein complexes in response to calcium: calcium-binding triggers exposure of apolar surface, promoting interaction with different sets of proteins thanks to 3 different hydrophobic pockets, leading to translocation to membranes. Involved in ER-Golgi transport by promoting the association between PDCD6IP and TSG101, thereby bridging together the ESCRT-III and ESCRT-I complexes. Together with PEF1, acts as a calcium-dependent adapter for the BCR(KLHL12) complex, a complex involved in ER-Golgi transport by regulating the size of COPII coats. In response to cytosolic calcium increase, the heterodimer formed with PEF1 interacts with, and bridges together the BCR(KLHL12) complex and SEC31 (SEC31A or SEC31B), promoting monoubiquitination of SEC31 and subsequent collagen export, which is required for neural crest specification. Involved in the regulation of the distribution and function of MCOLN1 in the endosomal pathway. Promotes localization and polymerization of TFG at endoplasmic reticulum exit site. Required for T-cell receptor-, Fas-, and glucocorticoid-induced apoptosis. May mediate Ca(2+)-regulated signals along the death pathway: interaction with DAPK1 can accelerate apoptotic cell death by increasing caspase-3 activity. Its role in apoptosis may however be indirect, as suggested by knockout experiments. May inhibit KDR/VEGFR2-dependent angiogenesis; the function involves inhibition of VEGF-induced phosphorylation of the Akt signaling pathway. In case of infection by HIV-1 virus, indirectly inhibits HIV-1 production by affecting viral Gag expression and distribution. Its function is as follows. Has a lower Ca(2+) affinity than isoform 1. This chain is Programmed cell death protein 6 (PDCD6), found in Homo sapiens (Human).